The sequence spans 569 residues: WD repeat-containing protein 20 (569 aa).

Ala-2 bears the N-acetylalanine mark. WD repeat units lie at residues 94-138 (RIYK…KETS), 139-210 (KLFN…KSTR), 211-252 (NPLL…FDSV), 253-331 (ELHG…SGSD), 332-426 (EDFQ…NSVP), 427-523 (PPLP…VPLL), and 524-559 (EPLI…CTWG). A phosphoserine mark is found at Ser-357 and Ser-360. Composition is skewed to polar residues over residues 405–423 (NATS…TPGN) and 431–445 (RSNS…NAGS). A disordered region spans residues 405-445 (NATSPPAGSNGNSVTTPGNSVPPPLPRSNSLPHSAVSNAGS). Ser-432, Ser-434, and Ser-465 each carry phosphoserine. The mediates XPO1-dependent nuclear export of WDR20-USP12 complexes stretch occupies residues 450-468 (MDGAIASGVSKFATLSLHD).

Interacts with USP12; promotes translocation of USP12/WDR20 to the plasma membrane. Component of the USP12/WDR20/WDR48 deubiquitinating complex. Interacts with USP46; contributes to the cytoplasmic localization of the USP46/WDR20 complex. Component of the USP12/DMWD/WDR48 deubiquitinating complex.

It localises to the cytoplasm. The protein localises to the nucleus. Its function is as follows. Regulator of deubiquitinating complexes. Activates deubiquitinating activity of complexes containing USP12. Anchors at the base of the ubiquitin-contacting loop of USP12 and remotely modulates the catalytic center of the enzyme. Regulates shuttling of the USP12 deubiquitinase complex between the plasma membrane, cytoplasm and nucleus. This chain is WD repeat-containing protein 20 (WDR20), found in Homo sapiens (Human).